A 116-amino-acid polypeptide reads, in one-letter code: uncharacterized protein (116 aa).

An RRM domain is found at 6–83 (ATVHVGNLAP…RCIRVSPANF (78 aa)).

The protein resides in the cytoplasm. It localises to the nucleus. This is an uncharacterized protein from Schizosaccharomyces pombe (strain 972 / ATCC 24843) (Fission yeast).